The primary structure comprises 235 residues: Large ribosomal subunit protein uL1 (235 aa).

This sequence belongs to the universal ribosomal protein uL1 family. As to quaternary structure, part of the 50S ribosomal subunit.

In terms of biological role, binds directly to 23S rRNA. The L1 stalk is quite mobile in the ribosome, and is involved in E site tRNA release. Protein L1 is also a translational repressor protein, it controls the translation of the L11 operon by binding to its mRNA. The protein is Large ribosomal subunit protein uL1 of Mycobacterium tuberculosis (strain ATCC 25177 / H37Ra).